Reading from the N-terminus, the 122-residue chain is Proteasome assembly chaperone 3 (122 aa).

An N-acetylmethionine modification is found at M1.

The protein belongs to the PSMG3 family. Homodimer. Interacts directly with alpha and beta subunits of the 20S proteasome but dissociates before the formation of half-proteasomes, probably upon recruitment of POMP. Interacts with PSMG4.

Chaperone protein which promotes assembly of the 20S proteasome. May cooperate with PSMG1-PSMG2 heterodimers to orchestrate the correct assembly of proteasomes. This is Proteasome assembly chaperone 3 (Psmg3) from Mus musculus (Mouse).